A 127-amino-acid chain; its full sequence is Anti-adapter protein IraD (127 aa).

The protein belongs to the GpW/Gp25 family. IraD subfamily. As to quaternary structure, interacts with RssB.

It localises to the cytoplasm. In terms of biological role, inhibits RpoS proteolysis by regulating RssB activity, thereby increasing the stability of the sigma stress factor RpoS during oxidative stress. Its effect on RpoS stability is due to its interaction with RssB, which probably blocks the interaction of RssB with RpoS, and the consequent delivery of the RssB-RpoS complex to the ClpXP protein degradation pathway. The sequence is that of Anti-adapter protein IraD from Escherichia coli (strain UTI89 / UPEC).